A 417-amino-acid chain; its full sequence is MYQPGILVRRKRVWKPWTVALITVALLLALAVLIGLLVYFLVYDEKTHYYQASFWIPSINYSSDLSKEQSKFRTGLKQKISNEIDVIFQRSSLKHHYVKSQVVNFRPSNDGVKADVLIKFQIPRKNAGTLKRQADNILQEKLQSSQSILKRDASLPYLREMNAAQAEHILNSDCGSGMEYPPIARIADGKPADKASWPWQSSLQVEGIHLCGASLIGSQWLVTSAHCFDNYKNPKLWTVSFGRTLSSPLTTRKVESIIVHENYASHKHDDDIAVVKLSSPVLFSENLHRVCLPDATFQVLPKSKVFVTGWGALKANGPFPNSLQEVEIEIISNDVCNQVNVYGGAISSGMICAGFLTGKLDACEGDSGGPLVISDNRNKWYLLGIVSWGIDCGKENKPGIYTRVTHYRDWIKSKTSI.

Residues 1-21 (MYQPGILVRRKRVWKPWTVAL) are Cytoplasmic-facing. The helical; Signal-anchor for type II membrane protein transmembrane segment at 22 to 42 (ITVALLLALAVLIGLLVYFLV) threads the bilayer. The Extracellular portion of the chain corresponds to 43 to 417 (YDEKTHYYQA…RDWIKSKTSI (375 aa)). The SEA domain maps to 46–165 (KTHYYQASFW…PYLREMNAAQ (120 aa)). A glycan (N-linked (GlcNAc...) asparagine) is linked at N60. The Peptidase S1 domain maps to 186–416 (IADGKPADKA…YRDWIKSKTS (231 aa)). A disulfide bridge connects residues C211 and C227. Residues H226 and D271 each act as charge relay system in the active site. Intrachain disulfides connect C336–C352 and C363–C392. S367 (charge relay system) is an active-site residue.

The protein belongs to the peptidase S1 family.

Its subcellular location is the membrane. The chain is Transmembrane protease serine 11G (Tmprss11g) from Mus musculus (Mouse).